The following is a 367-amino-acid chain: tRNA pseudouridine synthase D (367 aa).

Catalysis depends on Asp80, which acts as the Nucleophile. Positions 156–316 (GIPNWFGEQR…LKQERRALRL (161 aa)) constitute a TRUD domain.

Belongs to the pseudouridine synthase TruD family.

It catalyses the reaction uridine(13) in tRNA = pseudouridine(13) in tRNA. Its function is as follows. Responsible for synthesis of pseudouridine from uracil-13 in transfer RNAs. The chain is tRNA pseudouridine synthase D from Xanthomonas campestris pv. campestris (strain 8004).